We begin with the raw amino-acid sequence, 102 residues long: Protein Tat (102 aa).

The tract at residues 1-24 (MEPVDPRLEPWKHPGSQPKTACNN) is interaction with human CREBBP. The segment at 1–48 (MEPVDPRLEPWKHPGSQPKTACNNCYCKKCCYHCQVCFLTKGLGISYG) is transactivation. Cys22, Cys25, and Cys27 together coordinate Zn(2+). The segment at 22-37 (CNNCYCKKCCYHCQVC) is cysteine-rich. At Lys28 the chain carries N6-acetyllysine; by host PCAF. Residues Cys30, His33, Cys34, and Cys37 each coordinate Zn(2+). The interval 38–48 (FLTKGLGISYG) is core. The tract at residues 48–102 (GRKKRRQRRGPPQGSQTHQVSLSKQPTSQPRGDPTGPKESKEKVERETETDPAVQ) is disordered. A Nuclear localization signal, RNA-binding (TAR), and protein transduction motif is present at residues 49 to 57 (RKKRRQRRG). The tract at residues 49-86 (RKKRRQRRGPPQGSQTHQVSLSKQPTSQPRGDPTGPKE) is interaction with the host capping enzyme RNGTT. Lys50 and Lys51 each carry N6-acetyllysine; by host EP300 and GCN5L2. Asymmetric dimethylarginine; by host PRMT6 is present on residues Arg52 and Arg53. Positions 62 to 77 (SQTHQVSLSKQPTSQP) are enriched in polar residues. Lys71 is covalently cross-linked (Glycyl lysine isopeptide (Lys-Gly) (interchain with G-Cter in ubiquitin)). The Cell attachment site signature appears at 78 to 80 (RGD). A compositionally biased stretch (basic and acidic residues) spans 83–96 (GPKESKEKVERETE).

This sequence belongs to the lentiviruses Tat family. Interacts with host CCNT1. Associates with the P-TEFb complex composed at least of Tat, P-TEFb (CDK9 and CCNT1), TAR RNA, RNA Pol II. Recruits the HATs CREBBP, TAF1/TFIID, EP300, PCAF and GCN5L2. Interacts with host KAT5/Tip60; this interaction targets the latter to degradation. Interacts with the host deacetylase SIRT1. Interacts with host capping enzyme RNGTT; this interaction stimulates RNGTT. Binds to host KDR, and to the host integrins ITGAV/ITGB3 and ITGA5/ITGB1. Interacts with host KPNB1/importin beta-1 without previous binding to KPNA1/importin alpha-1. Interacts with EIF2AK2. Interacts with host nucleosome assembly protein NAP1L1; this interaction may be required for the transport of Tat within the nucleus, since the two proteins interact at the nuclear rim. Interacts with host C1QBP/SF2P32; this interaction involves lysine-acetylated Tat. Interacts with the host chemokine receptors CCR2, CCR3 and CXCR4. Interacts with host DPP4/CD26; this interaction may trigger an anti-proliferative effect. Interacts with host LDLR. Interacts with the host extracellular matrix metalloproteinase MMP1. Interacts with host PRMT6; this interaction mediates Tat's methylation. Interacts with, and is ubiquitinated by MDM2/Hdm2. Interacts with host PSMC3 and HTATIP2. Interacts with STAB1; this interaction may overcome SATB1-mediated repression of IL2 and IL2RA (interleukin) in T cells by binding to the same domain than HDAC1. Interacts (when acetylated) with human CDK13, thereby increasing HIV-1 mRNA splicing and promoting the production of the doubly spliced HIV-1 protein Nef. Interacts with host TBP; this interaction modulates the activity of transcriptional pre-initiation complex. Interacts with host RELA. Interacts with host PLSCR1; this interaction negatively regulates Tat transactivation activity by altering its subcellular distribution. Post-translationally, asymmetrical arginine methylation by host PRMT6 seems to diminish the transactivation capacity of Tat and affects the interaction with host CCNT1. Acetylation by EP300, CREBBP, GCN5L2/GCN5 and PCAF regulates the transactivation activity of Tat. EP300-mediated acetylation of Lys-50 promotes dissociation of Tat from the TAR RNA through the competitive binding to PCAF's bromodomain. In addition, the non-acetylated Tat's N-terminus can also interact with PCAF. PCAF-mediated acetylation of Lys-28 enhances Tat's binding to CCNT1. Lys-50 is deacetylated by SIRT1. In terms of processing, polyubiquitination by host MDM2 does not target Tat to degradation, but activates its transactivation function and fosters interaction with CCNT1 and TAR RNA. Post-translationally, phosphorylated by EIF2AK2 on serine and threonine residues adjacent to the basic region important for TAR RNA binding and function. Phosphorylation of Tat by EIF2AK2 is dependent on the prior activation of EIF2AK2 by dsRNA.

It localises to the host nucleus. Its subcellular location is the host nucleolus. The protein resides in the host cytoplasm. The protein localises to the secreted. Its function is as follows. Transcriptional activator that increases RNA Pol II processivity, thereby increasing the level of full-length viral transcripts. Recognizes a hairpin structure at the 5'-LTR of the nascent viral mRNAs referred to as the transactivation responsive RNA element (TAR) and recruits the cyclin T1-CDK9 complex (P-TEFb complex) that will in turn hyperphosphorylate the RNA polymerase II to allow efficient elongation. The CDK9 component of P-TEFb and other Tat-activated kinases hyperphosphorylate the C-terminus of RNA Pol II that becomes stabilized and much more processive. Other factors such as HTATSF1/Tat-SF1, SUPT5H/SPT5, and HTATIP2 are also important for Tat's function. Besides its effect on RNA Pol II processivity, Tat induces chromatin remodeling of proviral genes by recruiting the histone acetyltransferases (HATs) CREBBP, EP300 and PCAF to the chromatin. This also contributes to the increase in proviral transcription rate, especially when the provirus integrates in transcriptionally silent region of the host genome. To ensure maximal activation of the LTR, Tat mediates nuclear translocation of NF-kappa-B by interacting with host RELA. Through its interaction with host TBP, Tat may also modulate transcription initiation. Tat can reactivate a latently infected cell by penetrating in it and transactivating its LTR promoter. In the cytoplasm, Tat is thought to act as a translational activator of HIV-1 mRNAs. Extracellular circulating Tat can be endocytosed by surrounding uninfected cells via the binding to several surface receptors such as CD26, CXCR4, heparan sulfate proteoglycans (HSPG) or LDLR. Neurons are rarely infected, but they internalize Tat via their LDLR. Through its interaction with nuclear HATs, Tat is potentially able to control the acetylation-dependent cellular gene expression. Modulates the expression of many cellular genes involved in cell survival, proliferation or in coding for cytokines or cytokine receptors. Tat plays a role in T-cell and neurons apoptosis. Tat induced neurotoxicity and apoptosis probably contribute to neuroAIDS. Circulating Tat also acts as a chemokine-like and/or growth factor-like molecule that binds to specific receptors on the surface of the cells, affecting many cellular pathways. In the vascular system, Tat binds to ITGAV/ITGB3 and ITGA5/ITGB1 integrins dimers at the surface of endothelial cells and competes with bFGF for heparin-binding sites, leading to an excess of soluble bFGF. The polypeptide is Protein Tat (Human immunodeficiency virus type 1 group M subtype B (isolate RF/HAT3) (HIV-1)).